The chain runs to 362 residues: Protein RecA (362 aa).

77 to 84 serves as a coordination point for ATP; that stretch reads GPESSGKT.

Belongs to the RecA family.

It localises to the cytoplasm. Functionally, can catalyze the hydrolysis of ATP in the presence of single-stranded DNA, the ATP-dependent uptake of single-stranded DNA by duplex DNA, and the ATP-dependent hybridization of homologous single-stranded DNAs. It interacts with LexA causing its activation and leading to its autocatalytic cleavage. The polypeptide is Protein RecA (Rhizobium leguminosarum bv. trifolii (strain WSM2304)).